Reading from the N-terminus, the 72-residue chain is Translation initiation factor IF-1 (72 aa).

The S1-like domain maps to 1-72; it reads MAKEESIEIE…TKGRITYRYK (72 aa).

The protein belongs to the IF-1 family. Component of the 30S ribosomal translation pre-initiation complex which assembles on the 30S ribosome in the order IF-2 and IF-3, IF-1 and N-formylmethionyl-tRNA(fMet); mRNA recruitment can occur at any time during PIC assembly.

It localises to the cytoplasm. Its function is as follows. One of the essential components for the initiation of protein synthesis. Stabilizes the binding of IF-2 and IF-3 on the 30S subunit to which N-formylmethionyl-tRNA(fMet) subsequently binds. Helps modulate mRNA selection, yielding the 30S pre-initiation complex (PIC). Upon addition of the 50S ribosomal subunit IF-1, IF-2 and IF-3 are released leaving the mature 70S translation initiation complex. The chain is Translation initiation factor IF-1 from Chlorobium chlorochromatii (strain CaD3).